The chain runs to 257 residues: Diaminopimelate epimerase (257 aa).

3 residues coordinate substrate: asparagine 13, glutamine 46, and asparagine 66. The active-site Proton donor is the cysteine 75. Substrate-binding positions include 76 to 77 (GN), asparagine 145, asparagine 175, and 193 to 194 (ER). Catalysis depends on cysteine 202, which acts as the Proton acceptor. 203–204 (GS) provides a ligand contact to substrate.

This sequence belongs to the diaminopimelate epimerase family. As to quaternary structure, homodimer.

The protein localises to the cytoplasm. It carries out the reaction (2S,6S)-2,6-diaminopimelate = meso-2,6-diaminopimelate. It functions in the pathway amino-acid biosynthesis; L-lysine biosynthesis via DAP pathway; DL-2,6-diaminopimelate from LL-2,6-diaminopimelate: step 1/1. Its function is as follows. Catalyzes the stereoinversion of LL-2,6-diaminopimelate (L,L-DAP) to meso-diaminopimelate (meso-DAP), a precursor of L-lysine and an essential component of the bacterial peptidoglycan. This chain is Diaminopimelate epimerase, found in Gluconobacter oxydans (strain 621H) (Gluconobacter suboxydans).